We begin with the raw amino-acid sequence, 166 residues long: MSLNIETKKVAVEEISAAIANAQTLVVAEYRGISVSSMTELRANARKEGVYLRVLKNTLARRAVQGTSFAELADQMVGPLVYAASEDAVAAAKVLHQFAKKDDKIVVKAGSYNGEVMNAAQVAELASIPSREELLSKLLFVMQAPVSGFARGLAALAEKKAGEEAA.

It belongs to the universal ribosomal protein uL10 family. Part of the ribosomal stalk of the 50S ribosomal subunit. The N-terminus interacts with L11 and the large rRNA to form the base of the stalk. The C-terminus forms an elongated spine to which L12 dimers bind in a sequential fashion forming a multimeric L10(L12)X complex.

In terms of biological role, forms part of the ribosomal stalk, playing a central role in the interaction of the ribosome with GTP-bound translation factors. The polypeptide is Large ribosomal subunit protein uL10 (rplJ) (Neisseria meningitidis serogroup A / serotype 4A (strain DSM 15465 / Z2491)).